Consider the following 155-residue polypeptide: Small ribosomal subunit protein uS7cz/uS7cy (155 aa).

This sequence belongs to the universal ribosomal protein uS7 family. Part of the 30S ribosomal subunit.

The protein localises to the plastid. The protein resides in the chloroplast. Its function is as follows. One of the primary rRNA binding proteins, it binds directly to 16S rRNA where it nucleates assembly of the head domain of the 30S subunit. The sequence is that of Small ribosomal subunit protein uS7cz/uS7cy (rps7-A) from Phaseolus vulgaris (Kidney bean).